Here is a 488-residue protein sequence, read N- to C-terminus: Cobyric acid synthase (488 aa).

The 194-residue stretch at 248 to 441 (VLRVVVPALP…VHGLFDTPAA (194 aa)) folds into the GATase cobBQ-type domain. C328 functions as the Nucleophile in the catalytic mechanism. Residue H433 is part of the active site.

It belongs to the CobB/CobQ family. CobQ subfamily.

It functions in the pathway cofactor biosynthesis; adenosylcobalamin biosynthesis. Functionally, catalyzes amidations at positions B, D, E, and G on adenosylcobyrinic A,C-diamide. NH(2) groups are provided by glutamine, and one molecule of ATP is hydrogenolyzed for each amidation. In Burkholderia vietnamiensis (strain G4 / LMG 22486) (Burkholderia cepacia (strain R1808)), this protein is Cobyric acid synthase.